A 240-amino-acid chain; its full sequence is LexA repressor (240 aa).

The H-T-H motif DNA-binding region spans 26–46; that stretch reads FDEMKDALDLASKSGIHRLIT. Catalysis depends on for autocatalytic cleavage activity residues serine 160 and lysine 198.

The protein belongs to the peptidase S24 family. Homodimer.

The enzyme catalyses Hydrolysis of Ala-|-Gly bond in repressor LexA.. Its function is as follows. Represses a number of genes involved in the response to DNA damage (SOS response), including recA and lexA. In the presence of single-stranded DNA, RecA interacts with LexA causing an autocatalytic cleavage which disrupts the DNA-binding part of LexA, leading to derepression of the SOS regulon and eventually DNA repair. This is LexA repressor from Agrobacterium fabrum (strain C58 / ATCC 33970) (Agrobacterium tumefaciens (strain C58)).